Here is a 138-residue protein sequence, read N- to C-terminus: uncharacterized protein (138 aa).

A Phosphoserine modification is found at Ser-110.

Its subcellular location is the cytoplasm. The protein resides in the nucleus. This is an uncharacterized protein from Schizosaccharomyces pombe (strain 972 / ATCC 24843) (Fission yeast).